The chain runs to 526 residues: Protein spinster homolog 1 (526 aa).

Residues 1 to 44 (MTSRRSHGDVTPFLTQADNTEEEGVRDPESQSSDEEEEEGKDHG) form a disordered region. 12 helical membrane-spanning segments follow: residues 59 to 79 (VIIV…RFTV), 98 to 118 (GLVQ…FGYL), 126 to 146 (LIMC…SFVS), 159 to 179 (LVGV…ADLF), 187 to 207 (MLSF…IVGS), 218 to 238 (WALR…IFVA), 272 to 292 (FILS…LALW), 321 to 341 (MIFG…GVEI), 355 to 375 (LVCA…LAFA), 384 to 404 (VFIF…ADIL), 419 to 439 (LQIV…IGVI), and 463 to 483 (MICA…ALFI).

Belongs to the major facilitator superfamily. Spinster (TC 2.A.1.49) family.

The protein resides in the lysosome membrane. The catalysed reaction is a 1-acyl-sn-glycero-3-phosphocholine(out) + H(+)(out) = a 1-acyl-sn-glycero-3-phosphocholine(in) + H(+)(in). It catalyses the reaction a 1-acyl-sn-glycero-3-phosphoethanolamine(out) + H(+)(out) = a 1-acyl-sn-glycero-3-phosphoethanolamine(in) + H(+)(in). The enzyme catalyses a 1-O-(1Z-alkenyl)-sn-glycero-3-phosphocholine(out) + H(+)(out) = a 1-O-(1Z-alkenyl)-sn-glycero-3-phosphocholine(in) + H(+)(in). It carries out the reaction a 1-O-(1Z-alkenyl)-sn-glycero-3-phosphoethanolamine(out) + H(+)(out) = a 1-O-(1Z-alkenyl)-sn-glycero-3-phosphoethanolamine(in) + H(+)(in). In terms of biological role, mediates the rate-limiting, proton-dependent, lysosomal efflux of lysophospholipids. Selective for zwitterionic headgroups such as lysophosphatidylcholine (LPC) and lysophosphatidylethanolamine (LPE). Essential player in lysosomal homeostasis. The polypeptide is Protein spinster homolog 1 (spns1) (Xenopus laevis (African clawed frog)).